The sequence spans 258 residues: Alpha-hydroxynitrile lyase (258 aa).

Catalysis depends on proton donor/acceptor residues Ser81 and His236.

The protein belongs to the AB hydrolase superfamily. Hydroxynitrile lyase family. In terms of assembly, homodimer.

It carries out the reaction (R)-mandelonitrile = benzaldehyde + hydrogen cyanide. In terms of biological role, involved in cyanogenesis, the release of HCN from injured tissues. Displays R-selective hydroxynitrile lyase activity. Also accepts nitromethane (MeNO2) as a donor in a reaction with aromatic aldehydes to yield (R)-beta-nitro alcohols. The sequence is that of Alpha-hydroxynitrile lyase from Arabidopsis thaliana (Mouse-ear cress).